The following is a 264-amino-acid chain: MMHSKKLTLGICLVLLIILIVGYVIMTKANGQNAQIKDTFNQTLKLYPTKNLDDFYDKEGFRDQEFKKGDKGTWIVNSGMNIQLKGGALKSREMVLYINRNTRKTKGYFIVGEITKDKKGYTHDKDKKYPVKMEHNKIIPTKPIKDEKLKKEIENFKFFVQYGNFKDFKDYKNGDISYNPNVPSYSAKYQLSNDDYNIQQLRKRYDIPTKKAPELLLKGDGDLKGSSIGSKDLEFTFVQNKRENIYFTDSVEFTPSEDTSYESN.

A helical transmembrane segment spans residues 7–27; it reads LTLGICLVLLIILIVGYVIMT.

It belongs to the staphylococcal tandem lipoprotein family.

Its subcellular location is the cell membrane. This is an uncharacterized protein from Staphylococcus aureus (strain MW2).